The primary structure comprises 181 residues: ATP-dependent protease subunit HslV (181 aa).

Thr-6 is an active-site residue. Na(+)-binding residues include Gly-162, Cys-165, and Thr-168.

It belongs to the peptidase T1B family. HslV subfamily. A double ring-shaped homohexamer of HslV is capped on each side by a ring-shaped HslU homohexamer. The assembly of the HslU/HslV complex is dependent on binding of ATP.

It localises to the cytoplasm. The catalysed reaction is ATP-dependent cleavage of peptide bonds with broad specificity.. Its activity is regulated as follows. Allosterically activated by HslU binding. In terms of biological role, protease subunit of a proteasome-like degradation complex believed to be a general protein degrading machinery. This is ATP-dependent protease subunit HslV from Nitratidesulfovibrio vulgaris (strain ATCC 29579 / DSM 644 / CCUG 34227 / NCIMB 8303 / VKM B-1760 / Hildenborough) (Desulfovibrio vulgaris).